Reading from the N-terminus, the 179-residue chain is Bifunctional protein PyrR (179 aa).

A PRPP-binding motif is present at residues 97–109 (IILTDDVLYTGRT).

Belongs to the purine/pyrimidine phosphoribosyltransferase family. PyrR subfamily.

The enzyme catalyses UMP + diphosphate = 5-phospho-alpha-D-ribose 1-diphosphate + uracil. Regulates the transcription of the pyrimidine nucleotide (pyr) operon in response to exogenous pyrimidines. Its function is as follows. Also displays a weak uracil phosphoribosyltransferase activity which is not physiologically significant. The protein is Bifunctional protein PyrR of Elusimicrobium minutum (strain Pei191).